Reading from the N-terminus, the 279-residue chain is Biotin synthase (279 aa).

The Radical SAM core domain occupies 1–227 (MKVYLCAISN…NAMIMVAGGR (227 aa)). The [4Fe-4S] cluster site is built by Cys-16, Cys-20, and Cys-23. 3 residues coordinate [2Fe-2S] cluster: Cys-60, Cys-95, and Cys-153.

It belongs to the radical SAM superfamily. Biotin synthase family. Homodimer. [4Fe-4S] cluster is required as a cofactor. The cofactor is [2Fe-2S] cluster.

The enzyme catalyses (4R,5S)-dethiobiotin + (sulfur carrier)-SH + 2 reduced [2Fe-2S]-[ferredoxin] + 2 S-adenosyl-L-methionine = (sulfur carrier)-H + biotin + 2 5'-deoxyadenosine + 2 L-methionine + 2 oxidized [2Fe-2S]-[ferredoxin]. The protein operates within cofactor biosynthesis; biotin biosynthesis; biotin from 7,8-diaminononanoate: step 2/2. Functionally, catalyzes the conversion of dethiobiotin (DTB) to biotin by the insertion of a sulfur atom into dethiobiotin via a radical-based mechanism. The polypeptide is Biotin synthase (Nitratiruptor sp. (strain SB155-2)).